Reading from the N-terminus, the 256-residue chain is Thiazole synthase (256 aa).

Lys-95 acts as the Schiff-base intermediate with DXP in catalysis. 1-deoxy-D-xylulose 5-phosphate contacts are provided by residues Gly-156, 182-183 (AG), and 204-205 (NT).

It belongs to the ThiG family. In terms of assembly, homotetramer. Forms heterodimers with either ThiH or ThiS.

The protein localises to the cytoplasm. It catalyses the reaction [ThiS sulfur-carrier protein]-C-terminal-Gly-aminoethanethioate + 2-iminoacetate + 1-deoxy-D-xylulose 5-phosphate = [ThiS sulfur-carrier protein]-C-terminal Gly-Gly + 2-[(2R,5Z)-2-carboxy-4-methylthiazol-5(2H)-ylidene]ethyl phosphate + 2 H2O + H(+). It participates in cofactor biosynthesis; thiamine diphosphate biosynthesis. Functionally, catalyzes the rearrangement of 1-deoxy-D-xylulose 5-phosphate (DXP) to produce the thiazole phosphate moiety of thiamine. Sulfur is provided by the thiocarboxylate moiety of the carrier protein ThiS. In vitro, sulfur can be provided by H(2)S. This chain is Thiazole synthase, found in Klebsiella pneumoniae subsp. pneumoniae (strain ATCC 700721 / MGH 78578).